The following is a 250-amino-acid chain: Triosephosphate isomerase (250 aa).

9–11 (NWK) contacts substrate. The active-site Electrophile is the His-96. The Proton acceptor role is filled by Glu-166. Substrate contacts are provided by residues Gly-172, Ser-212, and 233–234 (GG).

Belongs to the triosephosphate isomerase family. As to quaternary structure, homodimer.

The protein localises to the cytoplasm. It catalyses the reaction D-glyceraldehyde 3-phosphate = dihydroxyacetone phosphate. It participates in carbohydrate biosynthesis; gluconeogenesis. The protein operates within carbohydrate degradation; glycolysis; D-glyceraldehyde 3-phosphate from glycerone phosphate: step 1/1. Its function is as follows. Involved in the gluconeogenesis. Catalyzes stereospecifically the conversion of dihydroxyacetone phosphate (DHAP) to D-glyceraldehyde-3-phosphate (G3P). The chain is Triosephosphate isomerase from Chlorobium luteolum (strain DSM 273 / BCRC 81028 / 2530) (Pelodictyon luteolum).